The following is a 328-amino-acid chain: Fructose-1,6-bisphosphatase class 1 (328 aa).

Residues glutamate 89, aspartate 110, leucine 112, and aspartate 113 each contribute to the Mg(2+) site. Residues asparagine 206, tyrosine 234, tyrosine 252 to tyrosine 254, and lysine 264 each bind substrate. Glutamate 270 is a Mg(2+) binding site.

This sequence belongs to the FBPase class 1 family. As to quaternary structure, homotetramer. It depends on Mg(2+) as a cofactor.

The protein localises to the cytoplasm. It catalyses the reaction beta-D-fructose 1,6-bisphosphate + H2O = beta-D-fructose 6-phosphate + phosphate. Its pathway is carbohydrate biosynthesis; gluconeogenesis. This chain is Fructose-1,6-bisphosphatase class 1, found in Wigglesworthia glossinidia brevipalpis.